The chain runs to 263 residues: Indolethylamine N-methyltransferase (263 aa).

An N6-succinyllysine modification is found at Lys-13. Residues Tyr-20, Tyr-25, 63-64 (GS), Tyr-69, Asp-85, and Asn-90 each bind S-adenosyl-L-methionine. An N6-succinyllysine modification is found at Lys-96. S-adenosyl-L-methionine contacts are provided by residues 142-143 (DV) and Leu-163.

Belongs to the class I-like SAM-binding methyltransferase superfamily. NNMT/PNMT/TEMT family. As to quaternary structure, monomer.

It localises to the cytoplasm. The catalysed reaction is a tertiary amine + S-adenosyl-L-methionine = a methylated tertiary amine + S-adenosyl-L-homocysteine + H(+). It carries out the reaction a secondary amine + S-adenosyl-L-methionine = a methylated secondary amine + S-adenosyl-L-homocysteine + H(+). It catalyses the reaction a primary amine + S-adenosyl-L-methionine = a methylated primary amine + S-adenosyl-L-homocysteine + H(+). The enzyme catalyses dimethyl sulfide + S-adenosyl-L-methionine = trimethylsulfonium + S-adenosyl-L-homocysteine. Catalyzes the N-methylation of tryptamine and structurally related compounds. Functions as a thioether S-methyltransferase and is active with a variety of thioethers and the corresponding selenium and tellurium compounds, including 3-methylthiopropionaldehyde, dimethyl selenide, dimethyl telluride, 2-methylthioethylamine, 2-methylthioethanol, methyl-n-propyl sulfide and diethyl sulfide. Plays an important role in the detoxification of selenium compounds. In Pongo abelii (Sumatran orangutan), this protein is Indolethylamine N-methyltransferase (INMT).